The chain runs to 751 residues: Transposable element P transposase (751 aa).

The THAP-type zinc finger occupies 1–77 (MKYCKFCCKA…LNADAVPSKV (77 aa)).

Functionally, P-element transposase that specifically mediates transposition of P-elements. Mediates both; precise and imprecise excision. The protein is Transposable element P transposase of Drosophila melanogaster (Fruit fly).